Here is a 241-residue protein sequence, read N- to C-terminus: Accessory protein p30II (241 aa).

2 consecutive short sequence motifs (nuclear localization signal) follow at residues R73 to R78 and G91 to R98. The interval A86–L153 is disordered. Positions P107–G138 are enriched in low complexity. The short motif at L175–R184 is the Mitochondrial targeting signal element.

The protein belongs to the HTLV-1 accessory protein p30II family. As to quaternary structure, p30II binds to the KIX domains of CREBBP and EP300.

The protein localises to the host nucleus. It is found in the host nucleolus. The protein resides in the host mitochondrion inner membrane. P30II is a multifunctional regulator that sequesters EP300/CREBBP and down-regulates CREB-responsive element (CRE) and Tax-responsive element (TRE) mediated transcription. Specifically binds and represses tax/rex mRNA nuclear export. Since Tax and Rex are positive regulators of viral gene expression, their inhibition by p30II reduces virion production, and allows the virus to escape the host immune surveillance and persist latently in an immune-competent host. Its function is as follows. p13II increases mitochondrial permeability to monovalent cations, producing a rapid, membrane potential-dependent influx of potassium. This could involve a channel-forming activity. Interferes with cell proliferation and transformation and promotes apoptosis induced by ceramide and Fas ligand, probably using the Ras signaling. This chain is Accessory protein p30II, found in Human T-cell leukemia virus 1 (isolate Caribbea HS-35 subtype A) (HTLV-1).